Reading from the N-terminus, the 230-residue chain is GTP cyclohydrolase III (230 aa).

The protein belongs to the archaeal-type GTP cyclohydrolase family.

The enzyme catalyses GTP + 3 H2O = 2-amino-5-formylamino-6-(5-phospho-D-ribosylamino)pyrimidin-4(3H)-one + 2 phosphate + 2 H(+). Functionally, catalyzes the formation of 2-amino-5-formylamino-6-ribofuranosylamino-4(3H)-pyrimidinone ribonucleotide monophosphate and inorganic phosphate from GTP. Also has an independent pyrophosphate phosphohydrolase activity. The protein is GTP cyclohydrolase III of Saccharolobus islandicus (strain M.14.25 / Kamchatka #1) (Sulfolobus islandicus).